Consider the following 342-residue polypeptide: Isopentenyl-diphosphate delta-isomerase (342 aa).

A substrate-binding site is contributed by 6 to 7 (RK). FMN is bound by residues serine 63, 64-66 (SMT), serine 94, and asparagine 122. Substrate is bound at residue 94-96 (SMR). A substrate-binding site is contributed by glutamine 157. Glutamate 158 contributes to the Mg(2+) binding site. Residues lysine 189, threonine 219, 269–271 (GLK), and 290–291 (AG) each bind FMN.

The protein belongs to the IPP isomerase type 2 family. As to quaternary structure, homooctamer. Dimer of tetramers. It depends on FMN as a cofactor. Requires NADPH as cofactor. Mg(2+) serves as cofactor.

It is found in the cytoplasm. The enzyme catalyses isopentenyl diphosphate = dimethylallyl diphosphate. Involved in the biosynthesis of isoprenoids. Catalyzes the 1,3-allylic rearrangement of the homoallylic substrate isopentenyl (IPP) to its allylic isomer, dimethylallyl diphosphate (DMAPP). The chain is Isopentenyl-diphosphate delta-isomerase from Rickettsia bellii (strain RML369-C).